We begin with the raw amino-acid sequence, 852 residues long: DNA double-strand break repair Rad50 ATPase (852 aa).

Positions 32, 33, 34, 35, 36, 37, 38, 53, 54, 59, 61, and 63 each coordinate ATP. S37 contributes to the Mg(2+) binding site. Residue Q142 coordinates Mg(2+). Coiled-coil stretches lie at residues 155-345 (EITE…EELD) and 389-427 (LLSI…QIAS). One can recognise a Zinc-hook domain in the interval 389–488 (LLSIEKTENE…SLSSLIEDLL (100 aa)). Zn(2+) is bound by residues C435 and C438. Coiled-coil stretches lie at residues 460–488 (DQKR…EDLL) and 534–711 (KIEE…LFDK). Mg(2+) is bound at residue D797.

It belongs to the SMC family. RAD50 subfamily. In terms of assembly, homodimer. Forms a complex with Mre11. The cofactor is Zn(2+).

The catalysed reaction is ATP + H2O = ADP + phosphate + H(+). Involved in DNA double-strand break repair (DSBR). The Rad50/Mre11 complex possesses single-strand endonuclease activity and ATP-dependent double-strand-specific 3'-5' exonuclease activity. Rad50 provides an ATP-dependent control of Mre11 by positioning DNA ends into the Mre11 active site: ATP-binding induces a large structural change from an open form with accessible Mre11 nuclease sites into a closed form. In Thermotoga maritima (strain ATCC 43589 / DSM 3109 / JCM 10099 / NBRC 100826 / MSB8), this protein is DNA double-strand break repair Rad50 ATPase.